We begin with the raw amino-acid sequence, 357 residues long: Trans-enoyl reductase resD (357 aa).

Tyrosine 211 lines the NADP(+) pocket.

The protein belongs to the zinc-containing alcohol dehydrogenase family.

It functions in the pathway antifungal biosynthesis. In terms of biological role, trans-enoyl reductase; part of the gene cluster that mediates the biosynthesis of the tetrahydropyranyl antifungal agent restricticin that acts as an inhibitor of CYP51 and blocks the ergosterol biosynthesis. The highly reducing polyketide synthase resH, the short chain dehydrogenase resG, the cyclase resF, the FAD-dependent monooxygenase resA and the enoylreductase resD are required to generate the first stable intermediate desmethylrestrictinol. ResH with resD biosynthesize the first polyketide chain intermediate that is reduced by resG, followed by epoxidation by resA before 6-endo cyclization via epoxide opening by resF leads to desmethylrestrictinol. The methyltransferase resE then catalyzes the C4 O-methylation of desmethylrestrictinol to produce restrictinol, and the nonribosomal peptide synthetase resC catalyzes the C3 esterification of restrictinol with glycine that leads to restricticin. This is Trans-enoyl reductase resD from Aspergillus sclerotiorum.